The primary structure comprises 415 residues: Putative competence-damage inducible protein (415 aa).

This sequence belongs to the CinA family.

The chain is Putative competence-damage inducible protein from Limosilactobacillus reuteri (strain DSM 20016) (Lactobacillus reuteri).